Here is a 463-residue protein sequence, read N- to C-terminus: Steroidogenic factor 1 (463 aa).

Residues 10 to 85 (DELCPVCGDK…VGMRLEAVRA (76 aa)) constitute a DNA-binding region (nuclear receptor). Residues 13–33 (CPVCGDKVSGYHYGLLTCESC) form an NR C4-type zinc finger. N6-acetyllysine is present on residues lysine 34, lysine 38, and lysine 72. An NR C4-type zinc finger spans residues 49-73 (CTESQNCKIDKTQRKRCPYCRFQKC). Lysine 119 is covalently cross-linked (Glycyl lysine isopeptide (Lys-Gly) (interchain with G-Cter in SUMO)). Residues 119-160 (KLETGPSMGPPPQTDYPLAPALHPGAKGLAPAPPAGPPGDYE) are disordered. A compositionally biased stretch (low complexity) spans 135-148 (PLAPALHPGAKGLA). Lysine 193 is covalently cross-linked (Glycyl lysine isopeptide (Lys-Gly) (interchain with G-Cter in SUMO)). A disordered region spans residues 197-216 (PEPYASPHEPAPPYGYPEPY). Serine 202 is subject to Phosphoserine; by CDK7. A compositionally biased stretch (pro residues) spans 205 to 216 (EPAPPYGYPEPY). Residues 224 to 461 (GVPELILKLL…NLLIEMLHAK (238 aa)) form the NR LBD domain. Residues glycine 343, tyrosine 438, and lysine 442 each coordinate a 1,2-diacyl-sn-glycero-3-phosphocholine.

The protein belongs to the nuclear hormone receptor family. NR5 subfamily. In terms of assembly, binds DNA as a monomer. Part of a complex consisting of SFPQ, NONO and NR5A1. Interacts with NR0B2, NCOA2 and PPARGC1A. Interacts with DGKQ and CDK7. Binds to and activated by HIPK3. Acetylation stimulates the transcriptional activity. In terms of processing, sumoylation reduces CDK7-mediated phosphorylation on Ser-202. Post-translationally, phosphorylated on Ser-202 by CDK7. This phosphorylation promotes transcriptional activity. As to expression, expressed in the pre-granulosa and Sertoli cells of the ovary and testis, respectively. In the testis it is also present in the interstitial cells. In the adult ovary it is expressed in the interstitial gland, and in the granulosa cells and theca interna of small to medium-sized antral follicles, but is not expressed in large antral follicles.

The protein resides in the nucleus. Its function is as follows. Transcriptional activator. Seems to be essential for sexual differentiation and formation of the primary steroidogenic tissues. Binds to the Ad4 site found in the promoter region of steroidogenic P450 genes such as CYP11A, CYP11B and CYP21B. Also regulates the AMH/Muellerian inhibiting substance gene as well as the AHCH and STAR genes. 5'-YCAAGGYC-3' and 5'-RRAGGTCA-3' are the consensus sequences for the recognition by NR5A1. The SFPQ-NONO-NR5A1 complex binds to the CYP17 promoter and regulates basal and cAMP-dependent transcriptional activity. Binds phosphatidylcholine and phospholipids with a phosphatidylinositol (PI) headgroup, in particular PI(3,4)P2 and PI(3,4,5)P3. Activated by the phosphorylation of NR5A1 by HIPK3 leading to increased steroidogenic gene expression upon cAMP signaling pathway stimulation. The sequence is that of Steroidogenic factor 1 (NR5A1) from Notamacropus eugenii (Tammar wallaby).